Here is a 450-residue protein sequence, read N- to C-terminus: Methionine aminopeptidase 2 (450 aa).

A disordered region spans residues 1–99; the sequence is MAVQAPEVDK…LFPNSQYPEG (99 aa). A compositionally biased stretch (acidic residues) spans 33–49; sequence GDEDAENEESDEDDDQG. The span at 60-75 shows a compositional bias: basic residues; that stretch reads KKKRKRKPKKKKKKGV. Histidine 200 contributes to the substrate binding site. A divalent metal cation is bound by residues aspartate 220, aspartate 231, and histidine 300. Histidine 308 contributes to the substrate binding site. 2 residues coordinate a divalent metal cation: glutamate 336 and glutamate 431.

It belongs to the peptidase M24A family. Methionine aminopeptidase eukaryotic type 2 subfamily. Co(2+) is required as a cofactor. The cofactor is Zn(2+). Requires Mn(2+) as cofactor. It depends on Fe(2+) as a cofactor.

The protein localises to the cytoplasm. The catalysed reaction is Release of N-terminal amino acids, preferentially methionine, from peptides and arylamides.. Functionally, cotranslationally removes the N-terminal methionine from nascent proteins. The N-terminal methionine is often cleaved when the second residue in the primary sequence is small and uncharged (Met-Ala-, Cys, Gly, Pro, Ser, Thr, or Val). The sequence is that of Methionine aminopeptidase 2 from Uncinocarpus reesii (strain UAMH 1704).